The following is a 278-amino-acid chain: MREGWFTEAVEDEGVAFSLAIDERVHEEQSEYQHIEVYRTRRWGRLLVLDGCVMLTERDEFLYHEMMAHPALFAHREPRRVAIVGGGDCGILREVLRHPGVEHTLQVELDERVTRVAETHFPDLCTANDDERAELRFTDGLRWIREAEPESLDVVIVDSTDPVGPAAGLFTKEFLTDVRSALGPGGIVVQQSESPLLHRDSVIAPLHRAASEAGFDGVHTLTFPVPSYPSGWWSATLMVNGGDPRNFREADSEEKPFETRYYNADIHRAALAVPELLK.

The 238-residue stretch at 3-240 (EGWFTEAVED…GWWSATLMVN (238 aa)) folds into the PABS domain. Q33 contacts S-methyl-5'-thioadenosine. H64 and D88 together coordinate spermidine. Residues E108 and 139–140 (DG) each bind S-methyl-5'-thioadenosine. D158 functions as the Proton acceptor in the catalytic mechanism. Spermidine is bound at residue 158-161 (DSTD). P165 is a binding site for S-methyl-5'-thioadenosine.

This sequence belongs to the spermidine/spermine synthase family. Homodimer or homotetramer.

The protein localises to the cytoplasm. The catalysed reaction is S-adenosyl 3-(methylsulfanyl)propylamine + putrescine = S-methyl-5'-thioadenosine + spermidine + H(+). It participates in amine and polyamine biosynthesis; spermidine biosynthesis; spermidine from putrescine: step 1/1. Its function is as follows. Catalyzes the irreversible transfer of a propylamine group from the amino donor S-adenosylmethioninamine (decarboxy-AdoMet) to putrescine (1,4-diaminobutane) to yield spermidine. This is Polyamine aminopropyltransferase from Halorhodospira halophila (strain DSM 244 / SL1) (Ectothiorhodospira halophila (strain DSM 244 / SL1)).